Reading from the N-terminus, the 139-residue chain is Putative pre-16S rRNA nuclease (139 aa).

This sequence belongs to the YqgF nuclease family.

Its subcellular location is the cytoplasm. Could be a nuclease involved in processing of the 5'-end of pre-16S rRNA. This chain is Putative pre-16S rRNA nuclease, found in Streptococcus pneumoniae serotype 19F (strain G54).